The following is a 277-amino-acid chain: Caspase-3 (277 aa).

M1 is modified (N-acetylmethionine). 2 consecutive propeptides follow at residues M1 to D9 and S10 to D28. K11 is subject to N6-acetyllysine. The residue at position 26 (S26) is a Phosphoserine. Residues H121 and C163 contribute to the active site. C163 carries the post-translational modification S-nitrosocysteine; in inhibited form.

Belongs to the peptidase C14A family. Heterotetramer that consists of two anti-parallel arranged heterodimers, each one formed by a 17 kDa (p17) and a 12 kDa (p12) subunit. Interacts with BIRC6/bruce. In terms of assembly, (Microbial infection) Subunit p17 interacts with African swine fever virus (ASFV) inhibitor of apoptosis protein. In terms of processing, cleavage by granzyme B, caspase-6, caspase-8 and caspase-10 generates the two active subunits. Additional processing of the propeptides is likely due to the autocatalytic activity of the activated protease. Active heterodimers between the small subunit of caspase-7 protease and the large subunit of caspase-3 also occur and vice versa. Post-translationally, S-nitrosylated on its catalytic site cysteine in unstimulated cell lines and denitrosylated upon activation of the Fas apoptotic pathway, associated with an increase in intracellular caspase activity. Fas therefore activates caspase-3 not only by inducing the cleavage of the caspase zymogen to its active subunits, but also by stimulating the denitrosylation of its active site thiol. Ubiquitinated by BIRC6; this activity is inhibited by DIABLO/SMAC.

It localises to the cytoplasm. It carries out the reaction Strict requirement for an Asp residue at positions P1 and P4. It has a preferred cleavage sequence of Asp-Xaa-Xaa-Asp-|- with a hydrophobic amino-acid residue at P2 and a hydrophilic amino-acid residue at P3, although Val or Ala are also accepted at this position.. Its activity is regulated as follows. Inhibited by BIRC6; following inhibition of BIRC6-caspase binding by DIABLO/SMAC, BIRC6 is subjected to caspase cleavage, leading to an increase in active caspases. In terms of biological role, involved in the activation cascade of caspases responsible for apoptosis execution. At the onset of apoptosis, it proteolytically cleaves poly(ADP-ribose) polymerase PARP1 at a '216-Asp-|-Gly-217' bond. Cleaves and activates sterol regulatory element binding proteins (SREBPs) between the basic helix-loop-helix leucine zipper domain and the membrane attachment domain. Cleaves and activates caspase-6, -7 and -9 (CASP6, CASP7 and CASP9, respectively). Cleaves and inactivates interleukin-18 (IL18). Triggers cell adhesion in sympathetic neurons through RET cleavage. Cleaves IL-1 beta between an Asp and an Ala, releasing the mature cytokine which is involved in a variety of inflammatory processes. Cleaves and inhibits serine/threonine-protein kinase AKT1 in response to oxidative stress. Acts as an inhibitor of type I interferon production during virus-induced apoptosis by mediating cleavage of antiviral proteins CGAS, IRF3 and MAVS, thereby preventing cytokine overproduction. Also involved in pyroptosis by mediating cleavage and activation of gasdermin-E (GSDME). Cleaves XRCC4 and phospholipid scramblase proteins XKR4, XKR8 and XKR9, leading to promote phosphatidylserine exposure on apoptotic cell surface. Cleaves BIRC6 following inhibition of BIRC6-caspase binding by DIABLO/SMAC. The protein is Caspase-3 (CASP3) of Sus scrofa (Pig).